The primary structure comprises 309 residues: Homoserine kinase (309 aa).

91-101 (PLARGLGSSAA) is an ATP binding site.

The protein belongs to the GHMP kinase family. Homoserine kinase subfamily.

It localises to the cytoplasm. It carries out the reaction L-homoserine + ATP = O-phospho-L-homoserine + ADP + H(+). Its pathway is amino-acid biosynthesis; L-threonine biosynthesis; L-threonine from L-aspartate: step 4/5. Its function is as follows. Catalyzes the ATP-dependent phosphorylation of L-homoserine to L-homoserine phosphate. This chain is Homoserine kinase, found in Bacillus velezensis (strain DSM 23117 / BGSC 10A6 / LMG 26770 / FZB42) (Bacillus amyloliquefaciens subsp. plantarum).